The chain runs to 103 residues: Hexon-interlacing protein (103 aa).

Residues L72–R99 adopt a coiled-coil conformation.

Belongs to the adenoviridae hexon-interlacing protein family. In terms of assembly, homotrimer. Interacts with hexon protein; this interaction tethers the hexons together. Self-interacts with adjacent proteins. Interacts with kinesin light chain KLC1; this interaction leads to capsid disruption at the nuclear pore complex during virus entry into host cell.

It is found in the virion. Its subcellular location is the host nucleus. Its function is as follows. Structural component of the virion that acts as a cement protein on the capsid exterior and forms triskelion structures consisting of three molecules that stabilize three hexon trimers at the center of each icosahedral facet and fixes the peripentonal hexons. Dispensable for assembly. During virus entry, recruits the anterograde motor kinesin-1 to the capsid docked at the nuclear pore complex thereby subjecting the docked capsid to a pulling force. The resulting tension leads to capsid disruption, dispersion of capsid fragments toward cell periphery and eventually viral DNA entry into the host nucleus. The sequence is that of Hexon-interlacing protein from Canis lupus familiaris (Dog).